Here is a 108-residue protein sequence, read N- to C-terminus: Glutaredoxin-C10 (108 aa).

In terms of domain architecture, Glutaredoxin spans 1–107; it reads MERVAKLASE…PMLKNAGALW (107 aa). A disulfide bridge links C21 with C24. The Responsive for interaction with TGA factors motif lies at 105–108; it reads ALWL.

Belongs to the glutaredoxin family. CC-type subfamily.

The protein localises to the cytoplasm. The protein resides in the nucleus. Functionally, has a glutathione-disulfide oxidoreductase activity in the presence of NADPH and glutathione reductase. Reduces low molecular weight disulfides and proteins. The chain is Glutaredoxin-C10 (GRXC10) from Oryza sativa subsp. japonica (Rice).